Reading from the N-terminus, the 469-residue chain is 3-isopropylmalate dehydratase large subunit 2 (469 aa).

Positions 347, 408, and 411 each coordinate [4Fe-4S] cluster.

Belongs to the aconitase/IPM isomerase family. LeuC type 1 subfamily. As to quaternary structure, heterodimer of LeuC and LeuD. The cofactor is [4Fe-4S] cluster.

The catalysed reaction is (2R,3S)-3-isopropylmalate = (2S)-2-isopropylmalate. Its pathway is amino-acid biosynthesis; L-leucine biosynthesis; L-leucine from 3-methyl-2-oxobutanoate: step 2/4. Its function is as follows. Catalyzes the isomerization between 2-isopropylmalate and 3-isopropylmalate, via the formation of 2-isopropylmaleate. The sequence is that of 3-isopropylmalate dehydratase large subunit 2 from Mannheimia succiniciproducens (strain KCTC 0769BP / MBEL55E).